The primary structure comprises 400 residues: 3-phenylpropionate/cinnamic acid dioxygenase ferredoxin--NAD(+) reductase component (400 aa).

An FAD-binding site is contributed by 5–36 (TIIIVGGGQAAAMAAASLRQQGFTGELHLFSD). An NAD(+)-binding site is contributed by 146-174 (SVVIVGAGTIGLELAASATQRGCKVTVIE).

The protein belongs to the bacterial ring-hydroxylating dioxygenase ferredoxin reductase family. This dioxygenase system consists of four proteins: the two subunits of the hydroxylase component (HcaE and HcaF), a ferredoxin (HcaC) and a ferredoxin reductase (HcaD). FAD serves as cofactor.

It carries out the reaction 2 reduced [2Fe-2S]-[ferredoxin] + NAD(+) + H(+) = 2 oxidized [2Fe-2S]-[ferredoxin] + NADH. It functions in the pathway aromatic compound metabolism; 3-phenylpropanoate degradation. Part of the multicomponent 3-phenylpropionate dioxygenase, that converts 3-phenylpropionic acid (PP) and cinnamic acid (CI) into 3-phenylpropionate-dihydrodiol (PP-dihydrodiol) and cinnamic acid-dihydrodiol (CI-dihydrodiol), respectively. In Escherichia coli O17:K52:H18 (strain UMN026 / ExPEC), this protein is 3-phenylpropionate/cinnamic acid dioxygenase ferredoxin--NAD(+) reductase component.